Reading from the N-terminus, the 581-residue chain is Coiled-coil domain-containing protein 102A (581 aa).

Disordered stretches follow at residues 1–61 (MNHT…GLGC), 156–219 (QRVR…IGTD), 496–517 (QAED…SLDE), and 534–581 (SRLR…LQIP). Positions 39–59 (TPSPSGGTPSSSPPLLLSPGL) are enriched in low complexity. A coiled-coil region spans residues 70 to 164 (REELRLRELE…AQRVRAEQSS (95 aa)). Positions 161–184 (EQSSPENASTAPESISSTASTHSN) are enriched in polar residues. Residues 185 to 202 (QPREAEIKQDNQDEEGVR) are compositionally biased toward basic and acidic residues. Residues 270-541 (AALEEDTSKL…LQSRLRRQQN (272 aa)) adopt a coiled-coil conformation. A compositionally biased stretch (acidic residues) spans 559–581 (EDADGPPSDPDEDEEEELQLQIP).

This is Coiled-coil domain-containing protein 102A (ccdc102a) from Danio rerio (Zebrafish).